The following is a 192-amino-acid chain: Chromophore lyase CpcS/CpeS 2 (192 aa).

Belongs to the CpcS/CpeS biliprotein lyase family.

In terms of biological role, covalently attaches a chromophore to Cys residue(s) of phycobiliproteins. This chain is Chromophore lyase CpcS/CpeS 2, found in Synechocystis sp. (strain ATCC 27184 / PCC 6803 / Kazusa).